Reading from the N-terminus, the 402-residue chain is Transcription regulatory protein OpdE (402 aa).

The next 12 membrane-spanning stretches (helical) occupy residues 22 to 42 (VLAIAVCAFALVASEFLPVSL), 60 to 80 (GIAISGAFAVLTSLFISSVAG), 86 to 106 (TLLLGLTAAMGMSGAIVALAP), 108 to 128 (YFVYMLGRALIGIVIGGFWSM), 147 to 167 (ALVNGGNALATVVAAPLGAWL), 170 to 190 (LIGWRGAFLCLVPVALVALAW), 220 to 240 (PGVMLGMLASSLFFMGQFSLF), 256 to 276 (AHVSLVLLVIGAAGFIGTLLI), 296 to 316 (ALIALVLTVLGGWPAIVVVLL), 318 to 338 (LWGLTGTSAPVGWWAWIARVF), 348 to 368 (LFVAVVQLSIALGSTLGGLLF), and 375 to 395 (ATFFASAAMLLIAAFLTILTA).

The protein to B.subtilis YwfA.

It localises to the cell membrane. Its function is as follows. Regulates the expression of oprD which encodes the imipenem-specific porin. This is Transcription regulatory protein OpdE (opdE) from Pseudomonas aeruginosa (strain ATCC 15692 / DSM 22644 / CIP 104116 / JCM 14847 / LMG 12228 / 1C / PRS 101 / PAO1).